Consider the following 328-residue polypeptide: AA9 family lytic polysaccharide monooxygenase A (328 aa).

The N-terminal stretch at 1-21 is a signal peptide; sequence MPSTKVAALSAVLALASTVAG. Residue H22 participates in Cu(2+) binding. H22 bears the Methylhistidine mark. 2 cysteine pairs are disulfide-bonded: C77–C199 and C118–C122. A glycan (N-linked (GlcNAc...) asparagine) is linked at N80. H107 is a Cu(2+) binding site. N121 and N159 each carry an N-linked (GlcNAc...) asparagine glycan. Residues H185 and Q194 each coordinate O2. Position 196 (Y196) interacts with Cu(2+). S235 and S237 each carry an O-linked (Man...) serine glycan. Residues T238 and T245 are each glycosylated (O-linked (Man...) threonine).

It belongs to the polysaccharide monooxygenase AA9 family. The cofactor is Cu(2+). The catalytically essential N-terminal histidine His-22 is post-translationally modified by methylation to prevent protonation of the histidine side chain, and protect the critical active site of the enzyme from oxidative damage.

It localises to the secreted. It carries out the reaction [(1-&gt;4)-beta-D-glucosyl]n+m + reduced acceptor + O2 = 4-dehydro-beta-D-glucosyl-[(1-&gt;4)-beta-D-glucosyl]n-1 + [(1-&gt;4)-beta-D-glucosyl]m + acceptor + H2O.. Functionally, lytic polysaccharide monooxygenase (LPMO) that depolymerizes crystalline and amorphous polysaccharides via the oxidation of scissile alpha- or beta-(1-4)-glycosidic bonds, yielding C1 and C4 oxidation products. Catalysis by LPMOs requires the reduction of the active-site copper from Cu(II) to Cu(I) by a reducing agent and H(2)O(2) or O(2) as a cosubstrate. Shows activity on cellulosic substrates (Avicel, carboxymethylcellulose) and xylan. This Talaromyces verruculosus (Penicillium verruculosum) protein is AA9 family lytic polysaccharide monooxygenase A.